The following is a 454-amino-acid chain: DNA primase small subunit (454 aa).

Active-site residues include glutamate 66, aspartate 131, and aspartate 133. Positions 131 and 133 each coordinate Mg(2+). Positions 131 and 133 each coordinate Mn(2+). 131–133 (DID) provides a ligand contact to a ribonucleoside 5'-triphosphate. Positions 143, 144, 150, and 153 each coordinate Zn(2+). The short motif at 143 to 153 (CCSKTNICEKC) is the Zinc knuckle motif element. 182 to 188 (SGRRGIH) serves as a coordination point for a ribonucleoside 5'-triphosphate. Aspartate 333 lines the Mg(2+) pocket. Aspartate 333 provides a ligand contact to Mn(2+). An a ribonucleoside 5'-triphosphate-binding site is contributed by 342-345 (HLLK). Residues 385-420 (DKNSQNDNGHGPTMETNTTENQKDNARGQSNKGHGF) form a disordered region. 2 stretches are compositionally biased toward polar residues: residues 389-404 (QNDN…NTTE) and 411-420 (RGQSNKGHGF).

It belongs to the eukaryotic-type primase small subunit family. Heterodimer of a catalytic subunit spp1/pri1 and a regulatory subunit spp2/pri2, also known as the DNA primase complex. Component of the alpha DNA polymerase complex (also known as the alpha DNA polymerase-primase complex) consisting of four subunits: the catalytic subunit pol1, the accessory subunit spb70/pol12, and the primase complex subunits spp1/pri1 and spp2/pri2 respectively. Mg(2+) is required as a cofactor. The cofactor is Mn(2+).

It localises to the nucleus. It carries out the reaction ssDNA + n NTP = ssDNA/pppN(pN)n-1 hybrid + (n-1) diphosphate.. In terms of biological role, catalytic subunit of the DNA primase complex and component of the DNA polymerase alpha complex (also known as the alpha DNA polymerase-primase complex - primosome/replisome) which play an essential role in the initiation of DNA synthesis. During the S phase of the cell cycle, the DNA polymerase alpha complex (composed of a catalytic subunit pol1, an accessory subunit spb70/pol12 and two primase subunits, the catalytic subunit spp1/pri1 and the regulatory subunit spp2/pri2) is recruited to DNA at the replicative forks. The primase subunit of the polymerase alpha complex initiates DNA synthesis by oligomerising short RNA primers on both leading and lagging strands. The sequence is that of DNA primase small subunit from Schizosaccharomyces pombe (strain 972 / ATCC 24843) (Fission yeast).